A 316-amino-acid polypeptide reads, in one-letter code: Methionyl-tRNA formyltransferase (316 aa).

Residue 110–113 coordinates (6S)-5,6,7,8-tetrahydrofolate; sequence SLLP.

The protein belongs to the Fmt family.

The catalysed reaction is L-methionyl-tRNA(fMet) + (6R)-10-formyltetrahydrofolate = N-formyl-L-methionyl-tRNA(fMet) + (6S)-5,6,7,8-tetrahydrofolate + H(+). Functionally, attaches a formyl group to the free amino group of methionyl-tRNA(fMet). The formyl group appears to play a dual role in the initiator identity of N-formylmethionyl-tRNA by promoting its recognition by IF2 and preventing the misappropriation of this tRNA by the elongation apparatus. In Halothermothrix orenii (strain H 168 / OCM 544 / DSM 9562), this protein is Methionyl-tRNA formyltransferase.